The following is a 320-amino-acid chain: MYPSIEDDDDLLAALCFDQSNGVEDPYGYMQTNEDNIFQDFGSCGVNLMQPQQEQFDSFNGNLEQVCSSFRGGNNGVVYSSSIGSAQLDLAASFSGVLQQETHQVCGFRGQNDDSAVPHLQQQQGQVFSGVVEINSSSSVGAVKEEFEEECSGKRRRTGSCSKPGTKACREKLRREKLNDKFMDLSSVLEPGRTPKTDKSAILDDAIRVVNQLRGEAHELQETNQKLLEEIKSLKADKNELREEKLVLKAEKEKMEQQLKSMVVPSPGFMPSQHPAAFHSHKMAVAYPYGYYPPNMPMWSPLPPADRDTSRDLKNLPPVA.

Positions 162 to 213 constitute a bHLH domain; the sequence is SKPGTKACREKLRREKLNDKFMDLSSVLEPGRTPKTDKSAILDDAIRVVNQL. Residues 299 to 320 form a disordered region; it reads WSPLPPADRDTSRDLKNLPPVA. The segment covering 305 to 314 has biased composition (basic and acidic residues); it reads ADRDTSRDLK.

As to quaternary structure, homodimer. As to expression, expressed constitutively in roots, leaves, stems, and flowers.

The protein localises to the nucleus. The sequence is that of Transcription factor bHLH34 (BHLH34) from Arabidopsis thaliana (Mouse-ear cress).